The primary structure comprises 132 residues: MTVRPSALDPAIASRLRRNDAGLFPAIAQQHDTGEVLMLGWMDDEALHRTLTTGRATYWSRSRGEYWVKGDTSGHQQWVRSVALDCDGDAVLVRVDQIGPACHTGTRNCFVADPLPTRVGDPGVTADAGPAR.

Residue Asp-85 participates in Mg(2+) binding. Cys-86 contacts Zn(2+). Positions 87 and 89 each coordinate Mg(2+). Zn(2+) is bound by residues Cys-102 and Cys-109.

The protein belongs to the PRA-CH family. In terms of assembly, homodimer. Requires Mg(2+) as cofactor. Zn(2+) is required as a cofactor.

It localises to the cytoplasm. The catalysed reaction is 1-(5-phospho-beta-D-ribosyl)-5'-AMP + H2O = 1-(5-phospho-beta-D-ribosyl)-5-[(5-phospho-beta-D-ribosylamino)methylideneamino]imidazole-4-carboxamide. It functions in the pathway amino-acid biosynthesis; L-histidine biosynthesis; L-histidine from 5-phospho-alpha-D-ribose 1-diphosphate: step 3/9. In terms of biological role, catalyzes the hydrolysis of the adenine ring of phosphoribosyl-AMP. The protein is Phosphoribosyl-AMP cyclohydrolase of Frankia alni (strain DSM 45986 / CECT 9034 / ACN14a).